The sequence spans 181 residues: MSRIGKLPIMIPAGVEITFGEKNISIKGPKATLVTPKCELLSYEHKEDKIILTCNFDTRESLAQYGLRRTLLANCIEGVTKGFSKTLEVIGVGYRVSVKGNIVELSVGYSHPVHIELPDGITAKAEGQKLTIMGSDKVLVGEMAARIRRIRKPEPYKGKGIKYESEIIRRKAGKSGGKGKK.

Belongs to the universal ribosomal protein uL6 family. As to quaternary structure, part of the 50S ribosomal subunit.

Its function is as follows. This protein binds to the 23S rRNA, and is important in its secondary structure. It is located near the subunit interface in the base of the L7/L12 stalk, and near the tRNA binding site of the peptidyltransferase center. The polypeptide is Large ribosomal subunit protein uL6 (Lawsonia intracellularis (strain PHE/MN1-00)).